The primary structure comprises 428 residues: Serine--tRNA ligase (428 aa).

Residue 235–237 (TAE) participates in L-serine binding. 266-268 (RSE) provides a ligand contact to ATP. Residue Glu-289 coordinates L-serine. Residue 353 to 356 (EISS) participates in ATP binding. Ser-389 is an L-serine binding site.

Belongs to the class-II aminoacyl-tRNA synthetase family. Type-1 seryl-tRNA synthetase subfamily. As to quaternary structure, homodimer. The tRNA molecule binds across the dimer.

It is found in the cytoplasm. It carries out the reaction tRNA(Ser) + L-serine + ATP = L-seryl-tRNA(Ser) + AMP + diphosphate + H(+). The enzyme catalyses tRNA(Sec) + L-serine + ATP = L-seryl-tRNA(Sec) + AMP + diphosphate + H(+). Its pathway is aminoacyl-tRNA biosynthesis; selenocysteinyl-tRNA(Sec) biosynthesis; L-seryl-tRNA(Sec) from L-serine and tRNA(Sec): step 1/1. In terms of biological role, catalyzes the attachment of serine to tRNA(Ser). Is also able to aminoacylate tRNA(Sec) with serine, to form the misacylated tRNA L-seryl-tRNA(Sec), which will be further converted into selenocysteinyl-tRNA(Sec). This Shewanella frigidimarina (strain NCIMB 400) protein is Serine--tRNA ligase.